The sequence spans 56 residues: Conotoxin reg3.9 (56 aa).

Positions 1–8 (LLFPLSAL) are cleaved as a signal peptide. The disordered stretch occupies residues 1-22 (LLFPLSALPLDGDQPADQPAER). The propeptide occupies 9–40 (PLDGDQPADQPAERMQDISPEQNFWFDLVERG). Disulfide bonds link Cys-41–Cys-55, Cys-42–Cys-53, and Cys-47–Cys-56.

This sequence belongs to the conotoxin M superfamily. Expressed by the venom duct.

It is found in the secreted. The protein is Conotoxin reg3.9 of Conus regius (Crown cone).